A 146-amino-acid chain; its full sequence is Cytochrome b5 type B (146 aa).

Positions 1 to 11 (MATPEASGSGR) are excised as a propeptide. The 77-residue stretch at 20–96 (VTYYRLEEVA…LKQYYIGDVH (77 aa)) folds into the Cytochrome b5 heme-binding domain. Residue K30 is modified to N6-acetyllysine. The heme site is built by H55 and H79. S80 is subject to Phosphoserine. A helical membrane pass occupies residues 119-136 (WAYWIVPIVGAILIGFLY).

Belongs to the cytochrome b5 family. Component of a complex composed of cytochrome b5, NADH-cytochrome b5 reductase (CYB5R3) and MTARC2.

It is found in the mitochondrion outer membrane. Cytochrome b5 is a membrane-bound hemoprotein functioning as an electron carrier for several membrane-bound oxygenases. This chain is Cytochrome b5 type B (Cyb5b), found in Rattus norvegicus (Rat).